The sequence spans 37 residues: Cytochrome b6-f complex subunit 5 (37 aa).

The chain crosses the membrane as a helical span at residues 5 to 25 (LLCGIVLGLIPITLMGLFVAA).

Belongs to the PetG family. The 4 large subunits of the cytochrome b6-f complex are cytochrome b6, subunit IV (17 kDa polypeptide, PetD), cytochrome f and the Rieske protein, while the 4 small subunits are PetG, PetL, PetM and PetN. The complex functions as a dimer.

The protein localises to the cellular thylakoid membrane. In terms of biological role, component of the cytochrome b6-f complex, which mediates electron transfer between photosystem II (PSII) and photosystem I (PSI), cyclic electron flow around PSI, and state transitions. PetG is required for either the stability or assembly of the cytochrome b6-f complex. In Synechococcus sp. (strain CC9311), this protein is Cytochrome b6-f complex subunit 5.